A 218-amino-acid polypeptide reads, in one-letter code: ATP phosphoribosyltransferase (218 aa).

The protein belongs to the ATP phosphoribosyltransferase family. Short subfamily. Heteromultimer composed of HisG and HisZ subunits.

The protein localises to the cytoplasm. It catalyses the reaction 1-(5-phospho-beta-D-ribosyl)-ATP + diphosphate = 5-phospho-alpha-D-ribose 1-diphosphate + ATP. The protein operates within amino-acid biosynthesis; L-histidine biosynthesis; L-histidine from 5-phospho-alpha-D-ribose 1-diphosphate: step 1/9. Its function is as follows. Catalyzes the condensation of ATP and 5-phosphoribose 1-diphosphate to form N'-(5'-phosphoribosyl)-ATP (PR-ATP). Has a crucial role in the pathway because the rate of histidine biosynthesis seems to be controlled primarily by regulation of HisG enzymatic activity. This is ATP phosphoribosyltransferase (hisG) from Deinococcus radiodurans (strain ATCC 13939 / DSM 20539 / JCM 16871 / CCUG 27074 / LMG 4051 / NBRC 15346 / NCIMB 9279 / VKM B-1422 / R1).